A 524-amino-acid polypeptide reads, in one-letter code: Acetyl-CoA hydrolase (524 aa).

275 to 279 (GIGNI) provides a ligand contact to CoA. Glu300 (5-glutamyl coenzyme A thioester intermediate) is an active-site residue. Positions 390 and 394 each coordinate CoA.

This sequence belongs to the acetyl-CoA hydrolase/transferase family.

The protein localises to the cytoplasm. It carries out the reaction acetyl-CoA + H2O = acetate + CoA + H(+). Functionally, presumably involved in regulating the intracellular acetyl-CoA pool for fatty acid and cholesterol synthesis and fatty acid oxidation. The protein is Acetyl-CoA hydrolase (ACH1) of Candida albicans (strain SC5314 / ATCC MYA-2876) (Yeast).